We begin with the raw amino-acid sequence, 1985 residues long: Voltage-dependent L-type calcium channel subunit alpha-1F (1985 aa).

Over residues 1 to 11 (MSESEVGKDTT) the composition is skewed to basic and acidic residues. A disordered region spans residues 1–56 (MSESEVGKDTTPEPSPANGTGPGPEWGLCPGPPTVGTDTSGASGLGTPRRRTQHNK). The Cytoplasmic portion of the chain corresponds to 1 to 92 (MSESEVGKDT…RSCISIVEWK (92 aa)). One copy of the I repeat lies at 79–375 (NPIRRSCISI…LVLGVLSGEF (297 aa)). The chain crosses the membrane as a helical span at residues 93–111 (PFDILILLTIFANCVALGV). Over 112-129 (YIPFPEDDSNTANHNLEQ) the chain is Extracellular. A helical membrane pass occupies residues 130–149 (VEYVFLVIFTVETVLKIVAY). The Cytoplasmic segment spans residues 150 to 161 (GLVLHPSAYIRN). Residues 162-180 (GWNLLDFIIVVVGLFSVLL) traverse the membrane as a helical segment. The Extracellular portion of the chain corresponds to 181 to 201 (EQGPGRPGDAPHTGGKPGGFD). Residues 202–220 (VKALRAFRVLRPLRLVSGV) traverse the membrane as a helical segment. Topologically, residues 221-239 (PSLHIVVNSIMKALVPLLH) are cytoplasmic. The helical transmembrane segment at 240–259 (IALLVLFVIIIYAIIGLELF) threads the bilayer. At 260-347 (LGRMHKTCYF…WMQDAMGYEL (88 aa)) the chain is on the extracellular side. N295 is a glycosylation site (N-linked (GlcNAc...) asparagine). E330 contributes to the Ca(2+) binding site. Residues 348-372 (PWVYFVSLVIFGSFFVLNLVLGVLS) form a helical membrane-spanning segment. Topologically, residues 373-529 (GEFSKEREKA…ARCRRAVKSN (157 aa)) are cytoplasmic. Positions 395 to 412 (QQMEEDLRGYLDWITQAE) are binding to the beta subunit. A compositionally biased stretch (low complexity) spans 455–469 (SHSTRSTHSTSSHAS). Residues 455–490 (SHSTRSTHSTSSHASLPASDTGSMTDTPGDEDEEEG) form a disordered region. The II repeat unit spans residues 515-761 (NRGLRARCRR…VFLAIAVDNL (247 aa)). The helical transmembrane segment at 530–549 (ACYWAVLLLVFLNTLTIASE) threads the bilayer. Over 550-564 (HHGQPLWLTQTQEYA) the chain is Extracellular. Residues 565-583 (NKVLLCLFTVEMLLKLYGL) form a helical membrane-spanning segment. The Cytoplasmic portion of the chain corresponds to 584-591 (GPSVYVAS). Residues 592-610 (FFNRFDCFVVCGGILETTL) form a helical membrane-spanning segment. Topologically, residues 611-620 (VEVGAMQPLG) are extracellular. The chain crosses the membrane as a helical span at residues 621–639 (ISVLRCVRLLRIFKVTRHW). Residues 640-658 (ASLSNLVASLLNSMKSIAS) lie on the Cytoplasmic side of the membrane. A helical membrane pass occupies residues 659 to 679 (LLLLLFLFIIIFSLLGMQLFG). The Extracellular portion of the chain corresponds to 680–733 (GKFNFDQTHTKRSTFDTFPQALLTVFQILTGEDWNVVMYDGIMAYGGPFFPGML). Ca(2+) is bound at residue E711. The helical transmembrane segment at 734-758 (VCVYFIILFICGNYILLNVFLAIAV) threads the bilayer. Over 759-876 (DNLASGDAGT…KACHTLIHHH (118 aa)) the chain is Cytoplasmic. Residues 766 to 834 (AGTAKDKGRE…EEEEENGAGH (69 aa)) are disordered. Residues 768-787 (TAKDKGREKSSEGNPPKENK) are compositionally biased toward basic and acidic residues. Residues 810–830 (MEEEEEEEEEEEEEEEEEEEN) are compositionally biased toward acidic residues. One copy of the III repeat lies at 858 to 1140 (CLSQTNPLRK…FFMMNIFVGF (283 aa)). A helical membrane pass occupies residues 877–895 (IFTSLILVFIILSSVSLAA). Residues 896 to 911 (EDPIRAHSFRNHILGY) are Extracellular-facing. Residues 912 to 931 (FDYAFTSIFTVEILLKMTVF) traverse the membrane as a helical segment. Over 932-943 (GAFLHRGSFCRS) the chain is Cytoplasmic. The chain crosses the membrane as a helical span at residues 944–962 (WFNLLDLLVVSVSLISFGI). Residues 963 to 968 (HSSAIS) lie on the Extracellular side of the membrane. The chain crosses the membrane as a helical span at residues 969–988 (VVKILRVLRVLRPLRAINRA). Topologically, residues 989–1007 (KGLKHVVQCVFVAIRTIGN) are cytoplasmic. The helical transmembrane segment at 1008–1027 (IMIVTTLLQFMFACIGVQLF) threads the bilayer. Topologically, residues 1028-1117 (KGKFYSCTDE…EGPIYNYHVE (90 aa)) are extracellular. The tract at residues 1065-1155 (RLWVNSDFNF…RAQGEQEYQN (91 aa)) is dihydropyridine binding. A Ca(2+)-binding site is contributed by E1091. The chain crosses the membrane as a helical span at residues 1118-1138 (ISVFFIVYIIIIAFFMMNIFV). Topologically, residues 1139 to 1195 (GFVIITFRAQGEQEYQNCELDKNQRQCVEYALKAQPLRRYIPKNPHQYRVWATVNSR) are cytoplasmic. An IV repeat occupies 1182–1449 (NPHQYRVWAT…LFVAVIMDNF (268 aa)). The helical transmembrane segment at 1196–1214 (AFEYLMFLLILLNTVALAM) threads the bilayer. Topologically, residues 1215–1229 (QHYEQTAPFNYAMDI) are extracellular. The helical transmembrane segment at 1230-1249 (LNMVFTGLFTIEMVLKIIAF) threads the bilayer. Over 1250–1256 (KPKHYFA) the chain is Cytoplasmic. The helical transmembrane segment at 1257 to 1278 (DAWNTFDALIVVGSVVDIAVTE) threads the bilayer. The Extracellular portion of the chain corresponds to 1279–1295 (VNNGGHLGESSEDTSRI). The helical transmembrane segment at 1296–1315 (SITFFRLFRVMRLVKLLSKG) threads the bilayer. Topologically, residues 1316-1334 (EGIRTLLWTFIKSFQALPY) are cytoplasmic. The helical transmembrane segment at 1335–1354 (VALLIAMIFFIYAVIGMQMF) threads the bilayer. Over 1355–1421 (GLVALQDGTQ…GEEFTCGSSF (67 aa)) the chain is Extracellular. The interval 1402-1468 (RCDPESDFGP…LGPHHLDEFK (67 aa)) is dihydropyridine binding. Positions 1414 to 1457 (EFTCGSSFAIVYFISFFMLCAFLIINLFVAVIMDNFDYLTRDWS) are phenylalkylamine binding. A helical transmembrane segment spans residues 1422–1446 (AIVYFISFFMLCAFLIINLFVAVIM). The Cytoplasmic segment spans residues 1447-1982 (DNFDYLTRDW…EDLGDEMACV (536 aa)). Disordered regions lie at residues 1643–1729 (VTEE…PHRR) and 1746–1778 (LKGT…SFEP). A compositionally biased stretch (acidic residues) spans 1644–1665 (TEEEEEEEEAVGQEAEEEEAEN). 2 stretches are compositionally biased toward polar residues: residues 1675–1687 (DSQP…SRIS) and 1713–1724 (NSRQPSVIQAGS). Residues 1767 to 1776 (DLDRAGRDSF) show a composition bias toward basic and acidic residues.

This sequence belongs to the calcium channel alpha-1 subunit (TC 1.A.1.11) family. CACNA1F subfamily. Voltage-dependent calcium channels are multisubunit complexes, consisting of alpha-1, alpha-2, beta and delta subunits in a 1:1:1:1 ratio. The channel activity is directed by the pore-forming and voltage-sensitive alpha-1 subunit. In many cases, this subunit is sufficient to generate voltage-sensitive calcium channel activity. The auxiliary subunits beta and alpha-2/delta linked by a disulfide bridge regulate the channel activity. Interacts (via IQ domain) with CABP4; in a calcium independent manner. Expressed in the inner and outer nuclear layers and the genglion cell layer of the retina.

The protein resides in the membrane. It carries out the reaction Ca(2+)(in) = Ca(2+)(out). Voltage-sensitive calcium channels (VSCC) mediate the entry of calcium ions into excitable cells and are also involved in a variety of calcium-dependent processes, including muscle contraction, hormone or neurotransmitter release, gene expression, cell motility, cell division and cell death. The isoform alpha-1F gives rise to L-type calcium currents. Long-lasting (L-type) calcium channels belong to the 'high-voltage activated' (HVA) group. They are blocked by dihydropyridines (DHP), phenylalkylamines, and by benzothiazepines. Activates at more negative voltages and does not undergo calcium-dependent inactivation (CDI), due to incoming calcium ions, during depolarization. In Mus musculus (Mouse), this protein is Voltage-dependent L-type calcium channel subunit alpha-1F.